Here is a 584-residue protein sequence, read N- to C-terminus: Alkaline nuclease (584 aa).

The tract at residues 409 to 429 (GGGADHHLRGSPGDSPPPIPF) is disordered.

Belongs to the herpesviridae alkaline nuclease family. In terms of assembly, interacts with major DNA-binding protein; this interaction increases the nuclease processivity of the alkaline exonuclease.

It is found in the host nucleus. The protein localises to the host cytoplasm. Its function is as follows. Plays a role in processing non linear or branched viral DNA intermediates in order to promote the production of mature packaged unit-length linear progeny viral DNA molecules. Exhibits endonuclease and exonuclease activities and accepts both double-stranded and single-stranded DNA as substrate. Exonuclease digestion of DNA is in the 5'-&gt; 3' direction and the products are 5'-monophosphate nucleosides. Additionally, forms a recombinase with the major DNA-binding protein, which displays strand exchange activity. This is Alkaline nuclease (UL98) from Homo sapiens (Human).